Here is a 367-residue protein sequence, read N- to C-terminus: GTP cyclohydrolase FolE2 (367 aa).

This sequence belongs to the GTP cyclohydrolase IV family.

The enzyme catalyses GTP + H2O = 7,8-dihydroneopterin 3'-triphosphate + formate + H(+). It functions in the pathway cofactor biosynthesis; 7,8-dihydroneopterin triphosphate biosynthesis; 7,8-dihydroneopterin triphosphate from GTP: step 1/1. Functionally, converts GTP to 7,8-dihydroneopterin triphosphate. The chain is GTP cyclohydrolase FolE2 from Dinoroseobacter shibae (strain DSM 16493 / NCIMB 14021 / DFL 12).